A 447-amino-acid polypeptide reads, in one-letter code: Argininosuccinate synthase (447 aa).

ATP-binding positions include 17 to 25 (AFSGGLDTS) and A43. Y99 serves as a coordination point for L-citrulline. ATP-binding residues include G129 and T131. Residues T131, N135, and D136 each contribute to the L-aspartate site. L-citrulline is bound at residue N135. Position 136 (D136) interacts with ATP. L-citrulline is bound by residues R139 and S192. D194 contacts ATP. L-citrulline-binding residues include T201, E203, and E280.

This sequence belongs to the argininosuccinate synthase family. Type 2 subfamily. As to quaternary structure, homotetramer.

The protein resides in the cytoplasm. The enzyme catalyses L-citrulline + L-aspartate + ATP = 2-(N(omega)-L-arginino)succinate + AMP + diphosphate + H(+). It functions in the pathway amino-acid biosynthesis; L-arginine biosynthesis; L-arginine from L-ornithine and carbamoyl phosphate: step 2/3. The polypeptide is Argininosuccinate synthase (Citrobacter koseri (strain ATCC BAA-895 / CDC 4225-83 / SGSC4696)).